Consider the following 366-residue polypeptide: 5-amino-6-(D-ribitylamino)uracil--L-tyrosine 4-hydroxyphenyl transferase (366 aa).

In terms of domain architecture, Radical SAM core spans 51 to 290 (RCGNAITWVK…MIAISRLFLD (240 aa)). [4Fe-4S] cluster contacts are provided by cysteine 70, cysteine 74, and cysteine 77.

The protein belongs to the radical SAM superfamily. CofH family. Consists of two subunits, CofG and CofH. The cofactor is [4Fe-4S] cluster.

It catalyses the reaction 5-amino-6-(D-ribitylamino)uracil + L-tyrosine + S-adenosyl-L-methionine = 5-amino-5-(4-hydroxybenzyl)-6-(D-ribitylimino)-5,6-dihydrouracil + 2-iminoacetate + 5'-deoxyadenosine + L-methionine + H(+). It functions in the pathway cofactor biosynthesis; coenzyme F0 biosynthesis. Catalyzes the radical-mediated synthesis of 5-amino-5-(4-hydroxybenzyl)-6-(D-ribitylimino)-5,6-dihydrouracil from 5-amino-6-(D-ribitylamino)uracil and L-tyrosine. The sequence is that of 5-amino-6-(D-ribitylamino)uracil--L-tyrosine 4-hydroxyphenyl transferase from Methanospirillum hungatei JF-1 (strain ATCC 27890 / DSM 864 / NBRC 100397 / JF-1).